The primary structure comprises 213 residues: 3,4-dihydroxy-2-butanone 4-phosphate synthase (213 aa).

D-ribulose 5-phosphate-binding positions include 37–38 (RE), Asp42, 150–154 (RSGHT), and Glu174. Residue Glu38 coordinates Mg(2+). Mg(2+) is bound at residue His153.

It belongs to the DHBP synthase family. Homodimer. Mg(2+) serves as cofactor. Requires Mn(2+) as cofactor.

The enzyme catalyses D-ribulose 5-phosphate = (2S)-2-hydroxy-3-oxobutyl phosphate + formate + H(+). It participates in cofactor biosynthesis; riboflavin biosynthesis; 2-hydroxy-3-oxobutyl phosphate from D-ribulose 5-phosphate: step 1/1. Functionally, catalyzes the conversion of D-ribulose 5-phosphate to formate and 3,4-dihydroxy-2-butanone 4-phosphate. This is 3,4-dihydroxy-2-butanone 4-phosphate synthase from Blochmanniella floridana.